The following is a 583-amino-acid chain: CD166 antigen (583 aa).

Positions 1–27 are cleaved as a signal peptide; the sequence is MESKGASSCRLLFCLLISATVFRPGLG. Ig-like V-type domains follow at residues 28-120 and 125-234; these read WYTV…TEDN and PTIV…KTIH. The Extracellular segment spans residues 28–527; sequence WYTVNSAYGD…NREKVNDQAK (500 aa). 2 disulfide bridges follow: Cys43-Cys113 and Cys157-Cys220. N-linked (GlcNAc...) asparagine glycans are attached at residues Asn91, Asn95, Asn167, Asn265, Asn306, Asn361, Asn457, Asn480, and Asn499. Ig-like C2-type domains are found at residues 245 to 328, 333 to 409, and 416 to 501; these read PTEQ…TAIT, DLSL…ESLT, and PQIK…LNVS. 3 disulfides stabilise this stretch: Cys270/Cys313, Cys354/Cys392, and Cys435/Cys485. The helical transmembrane segment at 528–549 threads the bilayer; that stretch reads LIVGIVVGLLLAALVAGVVYWL. Residues 550–583 are Cytoplasmic-facing; sequence YMKKSKTASKHVNKDLGNMEENKKLEENNHKTEA. Positions 562-583 are disordered; that stretch reads NKDLGNMEENKKLEENNHKTEA. Residues 569 to 583 are compositionally biased toward basic and acidic residues; the sequence is EENKKLEENNHKTEA.

As to quaternary structure, homodimer. Interacts (via extracellular domain) with CD6 (via extracellular domain). Homodimerization and interaction with CD6 involve the same region and cannot occur simultaneously. The affinity for CD6 is much higher than the affinity for self-association. Interacts (via glycosylated extracellular domain) with LGALS1 and LGALS3. Interaction with LGALS1 or LGALS3 inhibits interaction with CD6. Glycosylated. As to expression, detected on hematopoietic stem cells derived from umbilical cord blood. Detected on lymph vessel endothelial cells, skin and tonsil. Detected on peripheral blood monocytes. Detected on monocyte-derived dendritic cells (at protein level). Detected at low levels in spleen, placenta, liver. Expressed by activated T-cells, B-cells, monocytes and thymic epithelial cells. Isoform 1 and isoform 3 are detected in vein and artery endothelial cells, astrocytes, keratinocytes and artery smooth muscle cells. Expressed by neurons in the brain. Restricted expression in tumor cell lines. Detected in highly metastasizing melanoma cell lines.

Its subcellular location is the cell membrane. The protein resides in the cell projection. It localises to the axon. The protein localises to the dendrite. It is found in the secreted. Cell adhesion molecule that mediates both heterotypic cell-cell contacts via its interaction with CD6, as well as homotypic cell-cell contacts. Promotes T-cell activation and proliferation via its interactions with CD6. Contributes to the formation and maturation of the immunological synapse via its interactions with CD6. Mediates homotypic interactions with cells that express ALCAM. Acts as a ligand for the LILRB4 receptor, enhancing LILRB4-mediated inhibition of T cell proliferation. Required for normal hematopoietic stem cell engraftment in the bone marrow. Mediates attachment of dendritic cells onto endothelial cells via homotypic interaction. Inhibits endothelial cell migration and promotes endothelial tube formation via homotypic interactions. Required for normal organization of the lymph vessel network. Required for normal hematopoietic stem cell engraftment in the bone marrow. Plays a role in hematopoiesis; required for normal numbers of hematopoietic stem cells in bone marrow. Promotes in vitro osteoblast proliferation and differentiation. Promotes neurite extension, axon growth and axon guidance; axons grow preferentially on surfaces that contain ALCAM. Mediates outgrowth and pathfinding for retinal ganglion cell axons. Its function is as follows. Inhibits activities of membrane-bound isoforms by competing for the same interaction partners. Inhibits cell attachment via homotypic interactions. Promotes endothelial cell migration. Inhibits endothelial cell tube formation. This is CD166 antigen (ALCAM) from Homo sapiens (Human).